The chain runs to 4555 residues: MSVTMGHCMGTKPPSCIILLLLKLFATVSQGLPGTGPLGFHFTHSTYNATVYENSAARTYVNSQSRMGITLIDLSWDIKYRIVSGDEEGFFKAEEVIIADFCFLRIRTKGGNSAILNREIQDNYLLIIKGSVRGEDLEAWTKVNIQVLDMNDLRPLFSPTTYSVTIAESTPLRTSVAQVTATDADIGSNGEFYYYFKNKVDLFSVHPTSGVISLSGRLNYDEKNRYDLEILAVDRGMKLYGNNGVSSTAKLYVHIERINEHAPIIHVVSHTPFSLDKEPTYAVVTVDDLDEGANGEIESLSIVDGDPLEQFFLAKEGKWLNEYKVKERRQVDWESFSYGYNLTIQAKDKGSPQKFSELKTVHIANPRRDNTPVRFEKDVYEVSISEFSPPGVLVAIVKVSPEPLDVEYKLLPGKDSDYFKINPRSGLIVTAQPLNTVKKEVYKLEVSDKEGDAKAQVTIGIEDANDHTPEFQEALYETFVNESVRVGTNVLTVSASDKDKGENGYITYSIASLNLLPFAINQFTGVISTTEELDFESSPETYRFIVRASDWGSPYRHESEVNVTIRVGNVNDNSPLFEKVACQGVISYDFPVGGHITAISAIDIDELELVKYKIISGNELGFFYLNPDSGVLQLKKSLMNSGIKNGNFALRITATDGENFADPMAINISVLHGKVSSKSFSCRETRVAQKLAEKLLIKAKANGKLNLEDGFLDFYSINRQGPHFDKSFPSDVAVKEDMLVGTNILKIKAYDADSGFNGKVLFTISDGNTDSCFNIDMETGQLKVLMPMDREHTDLYVLNITIYDLGKPQKSSWRLLTVNVEDANDNNPVFLQDSYSVSILESSSIGTEIIQVEARDKDLGSNGEVMYSVLTDTHQFIINSSTGIVYIADQLDRESKANYSLKIEARDKAESGQQLFSVVTLKIFLDDVNDCSPAFIPSSYSVKVLEDLPVGTVIAWLETQDPDLGLGGQVRYSLVNDYNGRFEVDKASGAIRLSKELDYEKQQFYNLTVRAKDKGRPVSLSSVSFVEVEVVDVNENLHTPYFPDFAVVGSVKENSRIGTSVLQVTAHDEDSGRDGEIQYSIRDGSGLGRFNIDDESGVITAADSLDRETTASYWLTVYATDRGVVPLYSTIEVYIEVEDVNDNAPLTSEPIYYPVVMENSPKDVSVIQIQAEDPDSGSNEKLTYRITSGNPQNFFAINIKTGLITTTSRKLDREQQAEHFLEVTVTDGGSSPKQSTIWVVVQVLDENDNRPQFPEKVYQIKLPERDRKKRGEPIYRAFAFDKDEGPNAEISYSIVDGNDDGKFFIDPKTGMVSSRKQFTAGSYDILTIKAVDNGRPQKSSTARLHIEWIKKPPPSPIPLTFDEPFYNFTVMESDKVTEIVGVVSVQPANTPLWFDIVGGNFDSSFDAEKGVGTIVIAKPLDAEQRSVYNMSVEVTDGTNIAVTQVFIKVLDNNDNGPEFSQPHYDVTISEDVLPDTEILQIEATDRDEKHKLSYTIHSSIDAVSMRKFRMDPSTGVLYTAERLDHEAQDKHILNIMVRDQEFPYRRNLARVIVNVEDANDHSPYFTNPLYEASVFESAALGSVVLQVTALDKDKGENAELIYSIEAGNTGNTFKIEPVLGIITISKEPDMAAMGQFVLSVKVTDQGSPPMSATAIVRISISMSDNSHPKFTHKDYQAEVNENVDIGTSVILISAISQSTLIYEVKDGNINGVFTINPYSGVITTRRALDYEHTSSYQLIIQATNMAGMASNATISVQIVDENDNPPVFLFSQYSGSLSEAAPINSIVRSLDNSPLVIRATDADSNQNALLVYQIVESTAKKFFTVDSSTGAIRTIANLDHEAIAHFHFHVHVRDSGNPQLTAESPVEVNIEVTDVNDNPPVFTQAVFETVLLLPTYIGVEVLKVSATDPDSEVPPELTYSLMEGSVDNFLMDPNTGVLTIKNNNLSKDHYMLIVRVSDGKFYSTAMVTVMVKEAMDSGLHFTQSFYSTSISENSTNITKVAIVNAVGNRLNEPLKYSILNPGNKFKIKSTSGVIQTTGVPFDREEQELYELVVEASRELDHLRVARVVVRVNIEDVNDNSPVFVGLPYYAAVQVDAEPGTLIYRVTAIDKDKGANGEVTYVLQDDYGHFEINPNSGNVILREAFNSDLSNIDYGVTILAKDGGNPSLSTFVELPITIVNKAMPVFDKPFYTASINEDITMNTPILSINATSPEGQGIIYLIIDGDPFQQFNIDFDTGVLKVISPLDYEVTSVYKLTVRASDALTGARAEVTVDLLVDDINDNPPVFDQPTYNTTLSESSLIGTPVLQLVSTDADSGNNKLVRYQIVQDTYNSTDYFHIDSSSGLILTARMLDHELVQHCTLKVTATDNGFPSLSSEVLVQIYISDVNDNPPVFNQLIYESYVSELAPRGHFVTCVQASDADSSDLDRLEYSILSGNDRASFLMDSKSGVLTLSSHRKQRMEPLYSLNVSVSDGLFTSTAQVHIRVLGANLYSPAFSQSTYVAEVRENAASGTKVIHVRATDGDPGTYGQVSYSIINDFAKDRFLIDSNGQIITTERLDRENPLEGDISIYLRALDGGGRTTFCTVRVIVVDENDNAPQFMTVEYRASVRADVGRGHLVTQVQALDPDDGANSRITYSLYSEASVSVADLLEIDPDNGWMVTKGNFNQLRNTVLSFFVKAVDGGIPVRHSLIPVYIHVLPPETFLPSFTQSQYSFTITEDTSIGSTVDTLRILPNQSVRFSMVNGERPENNKEGVFIIEQETGAIKLDKRLDHEVSPAFHFKVAATIPLDKVDIVFTVDVDVKVLDLNDNKPVFETSTYETIIMEGMPVGTKLAQVRAIDMDWGANGQVTYSLHSDSHLEKVIEAFNIDSNTGWISTLKDLDHETDPAFSFFVVASDLGEAFSLSSMALVSVKVTDINDNAPVFAHEVYRGNVKESDPPGEVVAVLSTLDKDTSNINRQVSYHITGGNPRGQFALGMVQSEWKVYVKRPLDREEQDIYFLNITASDGLFVTQAMVEVTVSDVNDNSPVCDQVAYSASLPEDIPSNKIILKVSAKDADIGSNGDIRYSLYGSGNNEFFLDPESGELKTLAVLDRERVPVYNLIARATDGGGRFCSSSVLLLLEDVNDNPPVFSSNHYTACVYENTATKALLTRVQAMDPDVGINRKVVYSLEDSASGVFSIDSSSGVIVLEQPLDREQQSSYNISVRATDQSPGQSLSSLASVTITVLDINDNPPVFERRDYLVTVPEDTSLGTQVLSVFATSKDIGTNAEITYLIRSGNEQGKFSINPKTGGISVLEALDYETCRRFYLVVEAKDGGTPALSTAATVSIDLTDVNDNPPRFSQDVYSAVISEDALEGDSVILLIAEDVDSKPNGQIRFSIVGGDRDNEFAVDPILGLVKVKKKLDRERVSGYSLLIQAVDSGIPAMSSTTTVNIDISDVNDNSPVFTPANYTAVIQENKPVGTSILQLVVTDRDSFHNGPPFSFSILSGNEDEEFMLDSHGILRSAVVFRHMESPEYLLCIQAKDSGKPQQVSHTYIRVRVIEESTHKPTAIPLEIFIVTMEDDFPGGVIGKIHATDQDMYDVLTFALKSEQKSLFKVNSHDGKIIALGGLDSGKYVLNVSVSDGRFQVPIDVVVHVEQLVHEMLQNTVTIRFEDVSPEDFVGLHMHGFRRILRNAVLTQKQDSLRIISIQPVVGTNQLDMLFAVEMHSSEFYKPAYLIQKLSNARRHLENVMHIAAILEKNCSGLDCQEQHCEQGLSLDSHALMTYSTARISFVCPRFYRNVRCTCNGGVCPGSNDPCVEKPCPEDMQCVGYEASRRPFLCQCPPGKLGECSGHTSLSFAGNSYIKYRLSENSKEEDFKLALRLRTLQSNGIIMYTRANPCMILKIVEGKLWFQLDCGSGPGILGISSRAVNDGSWHSVFLELNRNFTSLALDDSYVERRRAPLYFQTLSTDSAIFFGALVQADNVRSLTDTRVTQVLGGFQGCLDSVVLNHYELPLQNKRSSFAEVVGLTELKLGCVLYPDACQRSPCLHGGSCSSLPSGGYQCSCLSQFTGTNCESEITACFPNPCRNGGSCDPIGNTFVCSCKAGLTGVTCEDDVDECEREECENGGSCVNLFGSFFCNCTPGYVGQYCGLRPVVVPNIQAGHSYVGKEELIGIAVVLFVIFTLIVLFIVFRKKVFRKNYSRNNITLVQDPATAALLHKSNGIPFRSLRAGDGRNVYQEVGPPQVPVRPMAYTPCFQSDSRSNLDKGLDVLGGEPQEMSTFHPESPRILTARRGVVVCSVAPNLPAVSPCRSDCDSIRKNGWDTGSENKGTEDTGEVTCFTNSNKGSNSEVQSLSSFQSDSGDDNAYHWDTSDWMPGARLSDIEEMPNYESQDGGAAHQGSTRELESDYYLGGYDIDSEYPPPHEEEFLSRDQLPPPLPEDFPDQYEALPPSQPTSLTSTMSPDCRRRPRFHPSQYLPPHPLPGETDLGGPSSSCDFSTFAVNMNQGTEVMAPTDSVSLSLHNSRGTSSSEMSARCGFDDSEVAMSDYESAGELSLTNLHIPFVETQQQTQV.

The first 31 residues, 1-31 (MSVTMGHCMGTKPPSCIILLLLKLFATVSQG), serve as a signal peptide directing secretion. Topologically, residues 32–4153 (LPGTGPLGFH…AGHSYVGKEE (4122 aa)) are extracellular. Cadherin domains follow at residues 43 to 157 (THST…RPLF), 158 to 262 (SPTT…NEHA), 263 to 374 (PIIH…TPVR), 376 to 471 (EKDV…TPEF), 472 to 577 (QEAL…SPLF), 578 to 680 (EKVA…SKSF), 726 to 830 (KSFP…NPVF), 831 to 935 (LQDS…SPAF), 936 to 1042 (IPSS…TPYF), 1043 to 1147 (PDFA…APLT), 1148 to 1253 (SEPI…RPQF), 1254 to 1358 (PEKV…SPIP), 1362 to 1459 (DEPF…GPEF), 1460 to 1565 (SQPH…SPYF), 1566 to 1768 (TNPL…PPVF), 1769 to 1882 (LFSQ…PPVF), 1883 to 1985 (TQAV…TQSF), 1982 to 2083 (TQSF…SPVF), 2084 to 2185 (VGLP…MPVF), 2186 to 2286 (DKPF…PPVF), 2287 to 2393 (DQPT…PPVF), 2394 to 2495 (NQLI…SPAF), 2496 to 2599 (SQST…APQF), 2600 to 2707 (MTVE…LPSF), 2708 to 2813 (TQSQ…KPVF), 2814 to 2923 (ETST…APVF), 2924 to 3028 (AHEV…SPVC), 3029 to 3130 (DQVA…PPVF), 3131 to 3235 (SSNH…PPVF), 3236 to 3340 (ERRD…PPRF), 3341 to 3445 (SQDV…SPVF), 3446 to 3550 (TPAN…KPTA), and 3551 to 3660 (IPLE…PEDF). A glycan (N-linked (GlcNAc...) asparagine) is linked at asparagine 48. N-linked (GlcNAc...) asparagine glycosylation is present at asparagine 341. 7 N-linked (GlcNAc...) asparagine glycosylation sites follow: asparagine 481, asparagine 562, asparagine 667, asparagine 799, asparagine 879, asparagine 898, and asparagine 1006. N-linked (GlcNAc...) asparagine glycosylation is found at asparagine 1367 and asparagine 1429. A glycan (N-linked (GlcNAc...) asparagine) is linked at asparagine 1751. Residues asparagine 1944, asparagine 1993, and asparagine 1996 are each glycosylated (N-linked (GlcNAc...) asparagine). Asparagine 2208, asparagine 2292, asparagine 2331, and asparagine 2467 each carry an N-linked (GlcNAc...) asparagine glycan. A glycan (N-linked (GlcNAc...) asparagine) is linked at asparagine 2734. Asparagine 3000 carries N-linked (GlcNAc...) asparagine glycosylation. Asparagine 3201 carries an N-linked (GlcNAc...) asparagine glycan. Residues asparagine 3449, asparagine 3618, and asparagine 3741 are each glycosylated (N-linked (GlcNAc...) asparagine). An EGF-like 1 domain is found at 3794-3832 (SNDPCVEKPCPEDMQCVGYEASRRPFLCQCPPGKLGECS). 3 disulfide bridges follow: cysteine 3798–cysteine 3809, cysteine 3803–cysteine 3821, and cysteine 3823–cysteine 3831. The region spanning 3834-4017 (HTSLSFAGNS…VGLTELKLGC (184 aa)) is the Laminin G-like domain. A glycan (N-linked (GlcNAc...) asparagine) is linked at asparagine 3926. Intrachain disulfides connect cysteine 3984–cysteine 4017, cysteine 4024–cysteine 4035, cysteine 4029–cysteine 4045, cysteine 4047–cysteine 4056, cysteine 4063–cysteine 4074, cysteine 4068–cysteine 4083, cysteine 4085–cysteine 4094, cysteine 4101–cysteine 4112, cysteine 4106–cysteine 4121, and cysteine 4123–cysteine 4132. EGF-like domains lie at 4020 to 4057 (YPDACQRSPCLHGGSCSSLPSGGYQCSCLSQFTGTNCE) and 4059 to 4095 (EITACFPNPCRNGGSCDPIGNTFVCSCKAGLTGVTCE). The EGF-like 4; calcium-binding domain maps to 4097 to 4133 (DVDECEREECENGGSCVNLFGSFFCNCTPGYVGQYCG). The chain crosses the membrane as a helical span at residues 4154–4174 (LIGIAVVLFVIFTLIVLFIVF). The Cytoplasmic segment spans residues 4175 to 4555 (RKKVFRKNYS…FVETQQQTQV (381 aa)). Disordered regions lie at residues 4300-4353 (IRKN…YHWD) and 4395-4474 (GGYD…LGGP). Residues 4322–4343 (CFTNSNKGSNSEVQSLSSFQSD) are compositionally biased toward polar residues. 2 positions are modified to omega-N-methylarginine: arginine 4508 and arginine 4518.

In terms of tissue distribution, restricted to the nervous system, mainly in brain. In brain, it is highly expressed in the olfactory bulb and retina. In the developing olfactory bulb, it localizes along the dendrites of these cells as well as in their axons to some extent. In retina, it cocentrates in the inner plexiform layer throughout development (at protein level).

The protein resides in the membrane. Its function is as follows. May play a role in the interactions between neurites derived from specific subsets of neurons during development. The polypeptide is Protocadherin Fat 3 (Fat3) (Mus musculus (Mouse)).